Reading from the N-terminus, the 103-residue chain is Protein translation factor SUI1 homolog (103 aa).

The protein belongs to the SUI1 family.

This is Protein translation factor SUI1 homolog from Methanocaldococcus jannaschii (strain ATCC 43067 / DSM 2661 / JAL-1 / JCM 10045 / NBRC 100440) (Methanococcus jannaschii).